The primary structure comprises 263 residues: Serine protease ami (263 aa).

The signal sequence occupies residues 1–21 (MNISRVLFAVVLVLTVSTYEC). Asparagine 2 carries an N-linked (GlcNAc...) asparagine glycan. Positions 22–26 (RPRGR) are cleaved as a propeptide — activation peptide. The Peptidase S1 domain occupies 27-254 (ILGGQDSKEK…YKSWIMETMY (228 aa)). A disulfide bridge connects residues cysteine 52 and cysteine 68. Histidine 67 acts as the Charge relay system in catalysis. Asparagine 73, asparagine 74, and asparagine 108 each carry an N-linked (GlcNAc...) asparagine glycan. Aspartate 115 functions as the Charge relay system in the catalytic mechanism. 3 disulfides stabilise this stretch: cysteine 149/cysteine 215, cysteine 180/cysteine 196, and cysteine 205/cysteine 230. Serine 209 functions as the Charge relay system in the catalytic mechanism. A glycan (N-linked (GlcNAc...) asparagine) is linked at asparagine 255.

The protein belongs to the peptidase S1 family. In terms of tissue distribution, in the embryo, localizes to paraxial regions at the neurula stage and anterior ventral regions at the tailbud stage. From the late tailbud to tadpole stage, expressed along the forming blood vessels including the anterior cardinal veins, posterior cardinal veins, intersomitic veins, dorsal longitudinal anastomosing vessel, dorsal aorta, pronephric sinus and most prominently around the vascular vitelline network, where expression shows left-right asymmetry in the stage 42 embryo. Localizes to endothelial cells. In adults, shows highest expression in liver with moderate levels of expression in the fat body, lung, gut and vessels. Weakly expressed in adult heart, muscle, testis and ovary.

The protein localises to the secreted. Its function is as follows. Probable serine protease. This is Serine protease ami from Xenopus laevis (African clawed frog).